A 402-amino-acid polypeptide reads, in one-letter code: MKKLLKSALLFAATGSALSLQALPVGNPAEPSLLIDGTMWEGASGDPCDPCATWCDAISIRAGYYGDYVFDRVLKVDVNKTFSGMAATPTQATGNASNTNQPEANGRPNIAYGRHMQDAEWFSNAAFLALNIWDRFDIFCTLGASNGYFKASSAAFNLVGLIGFSAASSISTDLPMQLPNVGITQGVVEFYTDTSFSWSVGARGALWECGCATLGAEFQYAQSNPKIEMLNVTSSPAQFVIHKPRGYKGASSNFPLPITAGTTEATDTKSATIKYHEWQVGLALSYRLNMLVPYIGVNWSRATFDADTIRIAQPKLKSEILNITTWNPSLIGSTTALPNNSGKDVLSDVLQIASIQINKMKSRKACGVAVGATLIDADKWSITGEARLINERAAHMNAQFRF.

The first 22 residues, 1–22, serve as a signal peptide directing secretion; it reads MKKLLKSALLFAATGSALSLQA.

It belongs to the chlamydial porin (CP) (TC 1.B.2) family. As to quaternary structure, part of a disulfide cross-linked outer membrane complex (COMC) composed of the major outer membrane porin (MOMP), the small cysteine-rich protein (OmcA) and the large cysteine-rich periplasmic protein (OmcB).

Its subcellular location is the cell outer membrane. Its function is as follows. In elementary bodies (EBs, the infectious stage, which is able to survive outside the host cell) provides the structural integrity of the outer envelope through disulfide cross-links with the small cysteine-rich protein and the large cysteine-rich periplasmic protein. It has been described in publications as the Sarkosyl-insoluble COMC (Chlamydia outer membrane complex), and serves as the functional equivalent of peptidoglycan. It is present but some of the disulfide bonds are reduced in reticulate bodies (RBs). In terms of biological role, permits diffusion of specific solutes through the outer membrane. This Chlamydophila psittaci (strain ATCC VR-125 / 6BC) (Chlamydia psittaci) protein is Major outer membrane porin (ompA).